The following is a 305-amino-acid chain: Sulfate adenylyltransferase subunit 2 (305 aa).

The protein belongs to the PAPS reductase family. CysD subfamily. Heterodimer composed of CysD, the smaller subunit, and CysN.

The catalysed reaction is sulfate + ATP + H(+) = adenosine 5'-phosphosulfate + diphosphate. It participates in sulfur metabolism; hydrogen sulfide biosynthesis; sulfite from sulfate: step 1/3. In terms of biological role, with CysN forms the ATP sulfurylase (ATPS) that catalyzes the adenylation of sulfate producing adenosine 5'-phosphosulfate (APS) and diphosphate, the first enzymatic step in sulfur assimilation pathway. APS synthesis involves the formation of a high-energy phosphoric-sulfuric acid anhydride bond driven by GTP hydrolysis by CysN coupled to ATP hydrolysis by CysD. In Azotobacter vinelandii (strain DJ / ATCC BAA-1303), this protein is Sulfate adenylyltransferase subunit 2.